Consider the following 2112-residue polypeptide: Phenolphthiocerol synthesis polyketide synthase type I Pks15/1 (2112 aa).

One can recognise a Ketosynthase family 3 (KS3) domain in the interval 46–469 (TEPVAVVGIG…GTNAHLILEE (424 aa)). Catalysis depends on for beta-ketoacyl synthase activity residues cysteine 216, histidine 351, and histidine 391. Residues 579–893 (TVVVFPGQGA…GQVFTTGVPV (315 aa)) form an acyltransferase region. The active-site For acyltransferase activity is the serine 670. The interval 941 to 1063 (HALLGAVVER…GMLGVAAAET (123 aa)) is N-terminal hotdog fold. Residues 941–1101 (HALLGAVVER…YAYGPAFQGL (161 aa)) are dehydratase. The region spanning 941–1215 (HALLGAVVER…TRPITAEQLR (275 aa)) is the PKS/mFAS DH domain. The active-site Proton acceptor; for dehydratase activity is the histidine 973. The C-terminal hotdog fold stretch occupies residues 1075 to 1215 (AESVDISDGY…TRPITAEQLR (141 aa)). Catalysis depends on aspartate 1136, which acts as the Proton donor; for dehydratase activity. The segment at 1406 to 1711 (GTLEDLVIQP…QARHIGKVVL (306 aa)) is enoylreductase. NADP(+) is bound by residues 1536–1553 (VLIHAGTGGVGMAAVQLA) and 1725–1740 (TVVITGATGAVGGVLA). Residues 1724 to 1905 (GTVVITGATG…SLAWGLWEQP (182 aa)) form a beta-ketoacyl reductase region. The region spanning 2010 to 2085 (ELLVGLVCLQ…AVAEYVAQQM (76 aa)) is the Carrier domain. Serine 2045 carries the post-translational modification O-(pantetheine 4'-phosphoryl)serine. Residues 2084-2100 (QMSGSRPTESGDPTSQV) show a composition bias toward polar residues. Residues 2084–2112 (QMSGSRPTESGDPTSQVVEPAAAEVSVHA) form a disordered region.

The protein belongs to the thiolase-like superfamily. Beta-ketoacyl-ACP synthases family. Pantetheine 4'-phosphate is required as a cofactor.

The catalysed reaction is a fatty acyl-[ACP] + malonyl-[ACP] + H(+) = a 3-oxoacyl-[ACP] + holo-[ACP] + CO2. It functions in the pathway lipid metabolism; fatty acid biosynthesis. Its function is as follows. Catalyzes the elongation by iterative transfer of p-hydroxybenzoyl group from FadD22 (pHBA-S-FAdD22) to form p-hydroxyphenylalkanoate (pHPA) intermediates during phenolphthiocerol (PPOL) biosynthesis. PPOL is an important intermediate in the biosynthesis of phenolic glycolipid (mycosid B). In Mycobacterium bovis (strain ATCC BAA-935 / AF2122/97), this protein is Phenolphthiocerol synthesis polyketide synthase type I Pks15/1 (pks15/1).